The primary structure comprises 258 residues: MERLSAAPVKGQTGPERPSPFSQLVYTNNDSYVIHHGDLRKIHKAASRGQAWKLERMMKKTTMDLNIRDAKKRTALYWACANGHAEVVTLLVDRKCQLDVLDGENRTILMKALQCQREACANILIDSGADPNIVDVYGNTAVHYAVNSENLSVVAKLLSCGADIEVKNKAGHTPLLLAIRKRSEEIVEFLLTKNANANAVDKFKCVHQQLLEYKQKISKNSQNSNPEGTSEGTPDEAAPLAERTPDTAESLVERTPDE.

The tract at residues 1–21 (MERLSAAPVKGQTGPERPSPF) is disordered. 4 ANK repeats span residues 71-100 (KKRTALYWACANGHAEVVTLLVDRKCQLDV), 104-133 (ENRTILMKALQCQREACANILIDSGADPNI), 137-166 (YGNTAVHYAVNSENLSVVAKLLSCGADIEV), and 170-199 (AGHTPLLLAIRKRSEEIVEFLLTKNANANA). The segment at 216-258 (KISKNSQNSNPEGTSEGTPDEAAPLAERTPDTAESLVERTPDE) is disordered. The span at 218–232 (SKNSQNSNPEGTSEG) shows a compositional bias: polar residues. Residues 243–258 (RTPDTAESLVERTPDE) are compositionally biased toward basic and acidic residues.

The polypeptide is Putative ankyrin repeat domain-containing protein 30B-like (ANKRD30BL) (Homo sapiens (Human)).